Here is a 475-residue protein sequence, read N- to C-terminus: Dynein regulatory complex subunit 4 (475 aa).

The tract at residues 1 to 22 is disordered; sequence MPPKRKSSPKGKTPTVVDGLST. Residues 1–113 are regulates microtubule-binding; the sequence is MPPKRKSSPK…LLYEQQNMLS (113 aa). 3 coiled-coil regions span residues 20–104, 142–200, and 242–426; these read LSTE…VKHL, RSLK…QEEE, and KNLD…VARV. The microtubule-binding stretch occupies residues 114 to 257; sequence ELKAESIIST…TSLKEELKEM (144 aa).

Belongs to the DRC4 family. As to quaternary structure, component of the nexin-dynein regulatory complex (N-DRC). Interacts with microtubules.

The protein localises to the cytoplasm. It localises to the cytoskeleton. The protein resides in the cell projection. It is found in the cilium. Its subcellular location is the flagellum. The protein localises to the cilium axoneme. It localises to the cilium basal body. The protein resides in the golgi apparatus. It is found in the flagellum axoneme. Component of the nexin-dynein regulatory complex (N-DRC), a key regulator of ciliary/flagellar motility which maintains the alignment and integrity of the distal axoneme and regulates microtubule sliding in motile axonemes. Plays an important role in the assembly of the N-DRC linker. Plays dual roles at both the primary (or non-motile) cilia to regulate hedgehog signaling and in motile cilia to coordinate cilia movement. Required for proper slow muscle development and positively regulates ciliary smoothened (SMO)-dependent Hedgehog (Hh) signaling pathway. Required for tether cilia motility which is essential for normal otolith formation and localization in the developing inner ear. This Danio rerio (Zebrafish) protein is Dynein regulatory complex subunit 4 (gas8).